The sequence spans 147 residues: MRTTFLAKPGEIEKKWYIIDAKDVVLGRLSTVVASILRGKNKPTFTPNVDMGDHVIIINAAEVKLTGKKATDKVYYHHSNHPGGLKARTAGNYREFNPEKLLELSIHGMLPKNTLGRKQGLNLHVYAGAEHAHAAQQPEALDINKLV.

Belongs to the universal ribosomal protein uL13 family. Part of the 50S ribosomal subunit.

In terms of biological role, this protein is one of the early assembly proteins of the 50S ribosomal subunit, although it is not seen to bind rRNA by itself. It is important during the early stages of 50S assembly. The protein is Large ribosomal subunit protein uL13 of Leuconostoc citreum (strain KM20).